Here is a 127-residue protein sequence, read N- to C-terminus: Small ribosomal subunit protein uS12m (127 aa).

It belongs to the universal ribosomal protein uS12 family.

It is found in the mitochondrion. Functionally, protein S12 is involved in the translation initiation step. This is Small ribosomal subunit protein uS12m (RPS12) from Chondrus crispus (Carrageen Irish moss).